A 239-amino-acid polypeptide reads, in one-letter code: MRTLFIGDLHLSADRLDITQAFNRFLDTELDDADALYILGDLFEVWVGDDLAAPFALELARRLKQISQRLPIYFIHGNRDFMLGKQFADAAGMQILPEVTCLDLYGVNTVILHGDSMCTLDKAYQRFRKLRSFAFARWLYSCLPKRKRQAIADKIRSNSQSSNQQKSYVIMDVEPSAVDALFAQTHCKQMIHGHTHRPAIHNFTNGCKRIVVGDWYEQGSVLVVSADGVDLKSLPFDAS.

Positions 8, 10, 41, 78, and 113 each coordinate Mn(2+). 78–79 (NR) is a binding site for substrate. Residues Asp-121, Ser-159, Asn-163, Lys-166, and His-194 each coordinate substrate. Mn(2+) contacts are provided by His-194 and His-196.

Belongs to the LpxH family. Mn(2+) is required as a cofactor.

The protein resides in the cell inner membrane. It carries out the reaction UDP-2-N,3-O-bis[(3R)-3-hydroxytetradecanoyl]-alpha-D-glucosamine + H2O = 2-N,3-O-bis[(3R)-3-hydroxytetradecanoyl]-alpha-D-glucosaminyl 1-phosphate + UMP + 2 H(+). The protein operates within glycolipid biosynthesis; lipid IV(A) biosynthesis; lipid IV(A) from (3R)-3-hydroxytetradecanoyl-[acyl-carrier-protein] and UDP-N-acetyl-alpha-D-glucosamine: step 4/6. Functionally, hydrolyzes the pyrophosphate bond of UDP-2,3-diacylglucosamine to yield 2,3-diacylglucosamine 1-phosphate (lipid X) and UMP by catalyzing the attack of water at the alpha-P atom. Involved in the biosynthesis of lipid A, a phosphorylated glycolipid that anchors the lipopolysaccharide to the outer membrane of the cell. This is UDP-2,3-diacylglucosamine hydrolase from Shewanella sp. (strain MR-7).